A 314-amino-acid chain; its full sequence is 4-hydroxyproline 2-epimerase (314 aa).

The active-site Proton acceptor is C88. Residues 89 to 90, H208, and D232 contribute to the substrate site; that span reads GH. C236 (proton donor) is an active-site residue. 237 to 238 provides a ligand contact to substrate; it reads GT.

It belongs to the proline racemase family. Homodimer.

It catalyses the reaction trans-4-hydroxy-L-proline = cis-4-hydroxy-D-proline. Its activity is regulated as follows. Inhibited by iodoacetate, iodoacetamide and by high amounts (10 mM) of pyrrole-2-carboxylate (PYC). Not inhibited by PYC at 1 mM. Its function is as follows. Allows intracellular utilization of 4-hydroxyproline, one of the major constituents of host collagen, by converting trans-4-hydroxy-L-proline (t4LHyp) to cis-4-hydroxy-D-proline (c4DHyp), which can be further metabolized by intracellular 4-hydroxy-D-proline oxidases. Strong B-cell mitogen. Plays an important role in the regulation of intra- and extracellular amino acid pools, allowing the bacterium to profit from host precursors and enzymatic pathways. Cannot use L-proline, trans-3-hydroxy-L-proline (t3LHyp) and pyrrolidone-5-carboxylate (P5C) as substrate. The polypeptide is 4-hydroxyproline 2-epimerase (Pseudomonas aeruginosa (strain ATCC 15692 / DSM 22644 / CIP 104116 / JCM 14847 / LMG 12228 / 1C / PRS 101 / PAO1)).